The chain runs to 114 residues: Cytochrome c2 (114 aa).

Glutamine 1 carries the pyrrolidone carboxylic acid modification. Positions 13, 16, 17, and 93 each coordinate heme c.

Belongs to the cytochrome c family. In terms of processing, binds 1 heme c group covalently per subunit.

It localises to the periplasm. Its function is as follows. Cytochrome c2 is found mainly in purple, non-sulfur, photosynthetic bacteria where it functions as the electron donor to the oxidized bacteriochlorophyll in the photophosphorylation pathway. However, it may also have a role in the respiratory chain and is found in some non-photosynthetic bacteria. In Rhodopseudomonas palustris, this protein is Cytochrome c2.